The primary structure comprises 230 residues: MEKIKVKEIFNNVYSVDFGDGLKRIATKSLIPGKRVYGEKLVYSDNIEYRVWNPNKSKLGAAIINGLKKMPIKKGTKVLYLGASAGTTPSHVADIAENSLVYALEFAPRIMREFIDSCNERKNLIPVLGDANRPQDYSNIVEKVDVIFEDVAQPNQAEILVKNAKWFLKENGYAMISIKARSVDVTKNPREIFAEQKKILIEGGFEIVDEVNIEPFEKDHMMMVGIWKGN.

Residues 87–88 (TT), 105–106 (EF), 130–131 (DA), and 150–153 (DVAQ) contribute to the S-adenosyl-L-methionine site.

The protein belongs to the methyltransferase superfamily. Fibrillarin family. As to quaternary structure, interacts with nop5. Component of box C/D small ribonucleoprotein (sRNP) particles that contain rpl7ae, FlpA and nop5, plus a guide RNA.

In terms of biological role, involved in pre-rRNA and tRNA processing. Utilizes the methyl donor S-adenosyl-L-methionine to catalyze the site-specific 2'-hydroxyl methylation of ribose moieties in rRNA and tRNA. Site specificity is provided by a guide RNA that base pairs with the substrate. Methylation occurs at a characteristic distance from the sequence involved in base pairing with the guide RNA. The protein is Fibrillarin-like rRNA/tRNA 2'-O-methyltransferase of Methanococcus maripaludis (strain C5 / ATCC BAA-1333).